The following is a 444-amino-acid chain: Structure-specific endonuclease subunit SLX1 (444 aa).

Residues 23 to 105 enclose the GIY-YIG domain; it reads AFYCCYLLRS…QNTKVSRHAD (83 aa). The SLX1-type zinc-finger motif lies at 240-295; it reads CGVCKQRLILQHDIIAVCSHSSCHCAAHLSCLSSHFLKDKDSDSELIPREGTCPAC. Disordered regions lie at residues 323 to 355 and 386 to 444; these read RRRR…DALQ and AHRP…EVIE.

It belongs to the SLX1 family. As to quaternary structure, forms a heterodimer with SLX4. It depends on a divalent metal cation as a cofactor.

Its subcellular location is the nucleus. Its function is as follows. Catalytic subunit of the SLX1-SLX4 structure-specific endonuclease that resolves DNA secondary structures generated during DNA repair and recombination. Has endonuclease activity towards branched DNA substrates, introducing single-strand cuts in duplex DNA close to junctions with ss-DNA. In Paracoccidioides brasiliensis (strain Pb18), this protein is Structure-specific endonuclease subunit SLX1.